A 283-amino-acid polypeptide reads, in one-letter code: MTRSVLVPSSLVREAEDKREATRKLGYVARAAAVFRIDRVVVFPDEDGERQWGGGFVETVLRYAATPPYLRKEAFDTRDELAYAGVLPPLRLSSWTGSDSSGSGSLRQGIVTQVGSEGRVRVNCGMQHPISLHEPPGMAVSEGERVTIRVSSRRPVRAKLVDDPLPGFSVERTGLGDALDRSDAGVRIATSRHGEPLSVASLGGYRERIARDGVTVAFGAPERGLPPMLGVSADAVNESVTDSSADAPARFDAWLNTIPDQGSEVVRTEEAVLATLGSLTLTE.

This is an uncharacterized protein from Halobacterium salinarum (strain ATCC 700922 / JCM 11081 / NRC-1) (Halobacterium halobium).